The sequence spans 169 residues: Co-chaperone protein HscB homolog (169 aa).

Residues 2–74 enclose the J domain; that stretch reads NYFDLFSLPV…CLRAQYLLLL (73 aa).

This sequence belongs to the HscB family. Interacts with HscA and stimulates its ATPase activity.

In terms of biological role, co-chaperone involved in the maturation of iron-sulfur cluster-containing proteins. Seems to help targeting proteins to be folded toward HscA. The polypeptide is Co-chaperone protein HscB homolog (Psychromonas ingrahamii (strain DSM 17664 / CCUG 51855 / 37)).